A 255-amino-acid chain; its full sequence is 3-deoxy-manno-octulosonate cytidylyltransferase (255 aa).

It belongs to the KdsB family.

It is found in the cytoplasm. It carries out the reaction 3-deoxy-alpha-D-manno-oct-2-ulosonate + CTP = CMP-3-deoxy-beta-D-manno-octulosonate + diphosphate. Its pathway is nucleotide-sugar biosynthesis; CMP-3-deoxy-D-manno-octulosonate biosynthesis; CMP-3-deoxy-D-manno-octulosonate from 3-deoxy-D-manno-octulosonate and CTP: step 1/1. It functions in the pathway bacterial outer membrane biogenesis; lipopolysaccharide biosynthesis. Activates KDO (a required 8-carbon sugar) for incorporation into bacterial lipopolysaccharide in Gram-negative bacteria. The protein is 3-deoxy-manno-octulosonate cytidylyltransferase of Psychromonas ingrahamii (strain DSM 17664 / CCUG 51855 / 37).